The primary structure comprises 284 residues: Orotidine 5'-phosphate decarboxylase (284 aa).

Residues aspartate 42, 64 to 66 (KTH), 96 to 105 (DRKFADIGNT), tyrosine 237, and arginine 255 contribute to the substrate site. Lysine 98 serves as the catalytic Proton donor.

This sequence belongs to the OMP decarboxylase family.

It catalyses the reaction orotidine 5'-phosphate + H(+) = UMP + CO2. Its pathway is pyrimidine metabolism; UMP biosynthesis via de novo pathway; UMP from orotate: step 2/2. The polypeptide is Orotidine 5'-phosphate decarboxylase (URA3) (Magnusiomyces magnusii (Yeast)).